A 471-amino-acid chain; its full sequence is Nitrosourea synthase (471 aa).

Positions 177–328 are HO-like; it reads MWLVQFAPDF…GRMAREKIIK (152 aa). Glu-189, Glu-215, His-225, Glu-281, His-311, Asp-315, His-318, His-407, His-409, and His-448 together coordinate Fe(2+). Residues 397-459 form a cupin region; the sequence is VEPRGELSNT…ANIESDECVY (63 aa).

In terms of assembly, homodimer. It depends on Fe(2+) as a cofactor.

It catalyses the reaction N(omega)-methyl-L-arginine + 2 NADH + 3 O2 + H(+) = N(delta)-hydroxy-N(omega)-methyl-N(omega)-nitroso-L-citrulline + 2 NAD(+) + 3 H2O. The enzyme catalyses N(omega)-methyl-L-arginine + NADH + O2 + H(+) = N(delta)-hydroxy-N(omega)-methyl-L-arginine + NAD(+) + H2O. It carries out the reaction N(delta)-hydroxy-N(omega)-methyl-L-arginine + NADH + O2 = N(delta),N(omega')-dihydroxy-N(omega)-methyl-L-arginine + NAD(+) + H2O. The catalysed reaction is N(delta),N(omega')-dihydroxy-N(omega)-methyl-L-arginine + O2 = N(delta)-hydroxy-N(omega)-methyl-N(omega)-nitroso-L-citrulline + H2O. It catalyses the reaction 2 N(delta)-hydroxy-N(omega)-methyl-N(omega)-nitroso-L-citrulline + AH2 = 2 N(delta)-hydroxy-N(omega)-methyl-L-citrulline + 2 nitric oxide + A. The protein operates within antibiotic biosynthesis. In terms of biological role, involved in the biosynthesis of the glucosamine-nitrosourea antibiotic streptozotocin (SZN). Catalyzes a complex multi-step reaction: the overall reaction is an oxidative rearrangement of the guanidine group of N(omega)-methyl-L-arginine (L-NMA), generating an N-nitrosourea product. SznF first hydroxylates L-NMA to form N(delta)-hydroxy-N(omega)-methyl-L-arginine (L-HMA), which is further hydroxylated to give N(delta)-hydroxy-N(omega)-hydroxy-N(omega)-methyl-L-arginine (L-DHMA). Subsequently, an oxidative rearrangement converts this intermediate to N(delta)-hydroxy-N(omega)-methyl-N(omega)-nitroso-L-citrulline. This product is unstable, and degrades non-enzymically into nitric oxide and the denitrosated product N(delta)-hydroxy-N(omega)-methyl-L-citrulline. The sequence is that of Nitrosourea synthase from Streptomyces achromogenes subsp. streptozoticus.